The sequence spans 391 residues: Formate-dependent phosphoribosylglycinamide formyltransferase (391 aa).

N(1)-(5-phospho-beta-D-ribosyl)glycinamide contacts are provided by residues 18-19 (EL) and E78. ATP-binding positions include R110, K151, 156-161 (SSGKGQ), 191-194 (EEFI), and E199. Positions 115–305 (DLASKDLKIK…EFELHLRAFL (191 aa)) constitute an ATP-grasp domain. The Mg(2+) site is built by E264 and E276. N(1)-(5-phospho-beta-D-ribosyl)glycinamide-binding positions include D283, K353, and 360 to 361 (RR).

Belongs to the PurK/PurT family. In terms of assembly, homodimer.

It carries out the reaction N(1)-(5-phospho-beta-D-ribosyl)glycinamide + formate + ATP = N(2)-formyl-N(1)-(5-phospho-beta-D-ribosyl)glycinamide + ADP + phosphate + H(+). The protein operates within purine metabolism; IMP biosynthesis via de novo pathway; N(2)-formyl-N(1)-(5-phospho-D-ribosyl)glycinamide from N(1)-(5-phospho-D-ribosyl)glycinamide (formate route): step 1/1. Functionally, involved in the de novo purine biosynthesis. Catalyzes the transfer of formate to 5-phospho-ribosyl-glycinamide (GAR), producing 5-phospho-ribosyl-N-formylglycinamide (FGAR). Formate is provided by PurU via hydrolysis of 10-formyl-tetrahydrofolate. This is Formate-dependent phosphoribosylglycinamide formyltransferase from Prochlorococcus marinus (strain MIT 9301).